The chain runs to 335 residues: Phosphate acyltransferase (335 aa).

This sequence belongs to the PlsX family. As to quaternary structure, homodimer. Probably interacts with PlsY.

It localises to the cytoplasm. The catalysed reaction is a fatty acyl-[ACP] + phosphate = an acyl phosphate + holo-[ACP]. Its pathway is lipid metabolism; phospholipid metabolism. In terms of biological role, catalyzes the reversible formation of acyl-phosphate (acyl-PO(4)) from acyl-[acyl-carrier-protein] (acyl-ACP). This enzyme utilizes acyl-ACP as fatty acyl donor, but not acyl-CoA. The sequence is that of Phosphate acyltransferase from Brevibacillus brevis (strain 47 / JCM 6285 / NBRC 100599).